The chain runs to 434 residues: 3-phosphoshikimate 1-carboxyvinyltransferase (434 aa).

3 residues coordinate 3-phosphoshikimate: Lys22, Ser23, and Arg27. Lys22 serves as a coordination point for phosphoenolpyruvate. Phosphoenolpyruvate contacts are provided by Gly93 and Arg121. 3-phosphoshikimate-binding residues include Ser168, Ser169, Gln170, Ser199, Asp320, and Lys347. Residue Gln170 participates in phosphoenolpyruvate binding. Asp320 acts as the Proton acceptor in catalysis. Phosphoenolpyruvate contacts are provided by Arg351, Arg394, and Lys419.

Belongs to the EPSP synthase family. Monomer.

The protein resides in the cytoplasm. The enzyme catalyses 3-phosphoshikimate + phosphoenolpyruvate = 5-O-(1-carboxyvinyl)-3-phosphoshikimate + phosphate. Its pathway is metabolic intermediate biosynthesis; chorismate biosynthesis; chorismate from D-erythrose 4-phosphate and phosphoenolpyruvate: step 6/7. Functionally, catalyzes the transfer of the enolpyruvyl moiety of phosphoenolpyruvate (PEP) to the 5-hydroxyl of shikimate-3-phosphate (S3P) to produce enolpyruvyl shikimate-3-phosphate and inorganic phosphate. This chain is 3-phosphoshikimate 1-carboxyvinyltransferase, found in Burkholderia cenocepacia (strain HI2424).